Here is a 714-residue protein sequence, read N- to C-terminus: Fatty acid oxidation complex subunit alpha (714 aa).

Residues 1 to 190 (MEMASAFTLN…KLGLVDDVVP (190 aa)) are enoyl-CoA hydratase. A 3-hydroxyacyl-CoA dehydrogenase region spans residues 306-714 (APLNSVGILG…FWKTTATDLQ (409 aa)).

In the N-terminal section; belongs to the enoyl-CoA hydratase/isomerase family. It in the central section; belongs to the 3-hydroxyacyl-CoA dehydrogenase family. In terms of assembly, heterotetramer of two alpha chains (FadJ) and two beta chains (FadI).

Its subcellular location is the cytoplasm. The catalysed reaction is a (3S)-3-hydroxyacyl-CoA = a (2E)-enoyl-CoA + H2O. The enzyme catalyses a 4-saturated-(3S)-3-hydroxyacyl-CoA = a (3E)-enoyl-CoA + H2O. It catalyses the reaction a (3S)-3-hydroxyacyl-CoA + NAD(+) = a 3-oxoacyl-CoA + NADH + H(+). It carries out the reaction (3S)-3-hydroxybutanoyl-CoA = (3R)-3-hydroxybutanoyl-CoA. Its pathway is lipid metabolism; fatty acid beta-oxidation. Functionally, catalyzes the formation of a hydroxyacyl-CoA by addition of water on enoyl-CoA. Also exhibits 3-hydroxyacyl-CoA epimerase and 3-hydroxyacyl-CoA dehydrogenase activities. In Escherichia coli O127:H6 (strain E2348/69 / EPEC), this protein is Fatty acid oxidation complex subunit alpha.